A 279-amino-acid chain; its full sequence is Estrogen receptor beta (279 aa).

The NR LBD domain occupies 27–261 (SPEQLVLTLL…DLLLEMLNAH (235 aa)).

This sequence belongs to the nuclear hormone receptor family. NR3 subfamily. In terms of assembly, binds DNA as a homodimer. Can form a heterodimer with ESR1. Interacts with NCOA1, NCOA3, NCOA5 and NCOA6 coactivators, leading to a strong increase of transcription of target genes. Interacts with UBE1C and AKAP13. Interacts with DNTTIP2. Interacts with CCDC62 in the presence of estradiol/E2; this interaction seems to enhance the transcription of target genes. Interacts with DNAAF4. Interacts with PRMT2. Interacts with CCAR2 (via N-terminus) in a ligand-independent manner. Interacts with RBM39, in the presence of estradiol (E2). Interacts with STUB1/CHIP.

The protein localises to the nucleus. In terms of biological role, nuclear hormone receptor. Binds estrogens with an affinity similar to that of ESR1/ER-alpha, and activates expression of reporter genes containing estrogen response elements (ERE) in an estrogen-dependent manner. The polypeptide is Estrogen receptor beta (ESR2) (Macaca mulatta (Rhesus macaque)).